Here is an 84-residue protein sequence, read N- to C-terminus: MKVSVLITLAVLGVMFLLTSAEERGSDQMDSPAWLKSMERIFQSEERECRWLFGGCEKDSDCCEHLGCRRAKPSWCGWDFTVGK.

An N-terminal signal peptide occupies residues 1-21; the sequence is MKVSVLITLAVLGVMFLLTSA. The propeptide occupies 22–47; that stretch reads EERGSDQMDSPAWLKSMERIFQSEER. Cystine bridges form between Cys49/Cys63, Cys56/Cys68, and Cys62/Cys76. Position 82 is a valine amide (Val82).

Belongs to the neurotoxin 10 (Hwtx-1) family. 05 (F4a) subfamily. As to expression, expressed by the venom gland.

It is found in the secreted. Probable ion channel inhibitor. The sequence is that of U21-theraphotoxin-Cg1a 3 from Chilobrachys guangxiensis (Chinese earth tiger tarantula).